Here is a 508-residue protein sequence, read N- to C-terminus: UDP-N-acetylmuramyl-tripeptide synthetase (508 aa).

Ser35 lines the UDP-N-acetyl-alpha-D-muramoyl-L-alanyl-D-glutamate pocket. 118–124 (GTDGKSS) provides a ligand contact to ATP. UDP-N-acetyl-alpha-D-muramoyl-L-alanyl-D-glutamate-binding positions include 163–164 (ST), Thr190, and Arg200. Lys232 is subject to N6-carboxylysine.

The protein belongs to the MurCDEF family. MurE subfamily. Post-translationally, carboxylation is probably crucial for Mg(2+) binding and, consequently, for the gamma-phosphate positioning of ATP.

The protein localises to the cytoplasm. The protein operates within cell wall biogenesis; peptidoglycan biosynthesis. Functionally, catalyzes the addition of an amino acid to the nucleotide precursor UDP-N-acetylmuramoyl-L-alanyl-D-glutamate (UMAG) in the biosynthesis of bacterial cell-wall peptidoglycan. This Borreliella burgdorferi (strain ATCC 35210 / DSM 4680 / CIP 102532 / B31) (Borrelia burgdorferi) protein is UDP-N-acetylmuramyl-tripeptide synthetase.